We begin with the raw amino-acid sequence, 130 residues long: Small ribosomal subunit protein uS9 (130 aa).

The segment at valine 111–arginine 130 is disordered. A compositionally biased stretch (basic residues) spans valine 116–arginine 130.

Belongs to the universal ribosomal protein uS9 family.

This is Small ribosomal subunit protein uS9 from Enterobacter sp. (strain 638).